The sequence spans 374 residues: Patatin-2-Kuras 4 (374 aa).

Positions 1–11 are cleaved as a signal peptide; sequence MILATTSSTCA. The region spanning 20 to 217 is the PNPLA domain; sequence LSIDGGGIKG…TVGDPALLSL (198 aa). A GXGXXG motif is present at residues 24–29; sequence GGGIKG. The GXSXG motif lies at 63–67; that stretch reads GTSTG. Catalysis depends on serine 65, which acts as the Nucleophile. N-linked (GlcNAc...) asparagine glycosylation occurs at asparagine 103. The active-site Proton acceptor is aspartate 203. Positions 203 to 205 match the DGA/G motif; sequence DGG. The stretch at 309-372 forms a coiled coil; it reads ENALTGTTTE…DRKKLRANKA (64 aa).

It belongs to the patatin family.

The protein localises to the vacuole. Its function is as follows. Probable lipolytic acyl hydrolase (LAH), an activity which is thought to be involved in the response of tubers to pathogens. The protein is Patatin-2-Kuras 4 (pat2-k4) of Solanum tuberosum (Potato).